A 935-amino-acid polypeptide reads, in one-letter code: MASLSSSFLVLFLLFQNSCYCFRSPLSVFKRYEESTRSLSNDCLGTTRPVMSPGSSDYTLDIRMPGVTPTESDTYLCKSYRLPVDDEAYVVDFRPHANMDTAHHMLLFGCNIPSSTDDYWDCSAGTCMDKSSIMYAWAKNAPPTKLPEGVGFRVGGKSGSRYFVLQVHYGNVKAFQDKHKDCTGVTVRVTPEKQPQIAGIYLSMSVDTVIPPGEEAVNSDIACLYNRPTIHPFAYRVHTHQLGQVVSGFRVRHGKWSLIGRQSPQLPQAFYPVEHPVEISPGDIIATRCLFTGKGRTSATYIGGTSNDEMCNLYIMYYMDAAHATSYMTCVQTGEPKLFQNIPEIANVPIPVSPDMMMMMGHGHHHTEAEPEKNTGLQQPKREEEEVLDQDVHLEEDTDWPGVNLKVGQVSGLALDPKNNLAIFHRGDHVWDENSFDRNFVYQQRGIGPIQESTILVVDPSSSKVLKSTGKNLFFLPHGLTIDRDGNYWVTDVALHQVFKLGAGKETPLLVLGRAFQPGSDRKHFCQPTDVAVDPITGNFFVADGYCNSRIMQFSPNGMFIMQWGEETSSNVPRPGQFRIPHSLTMVPDQGQLCVADRENGRIQCFHAETGNFVKQIKHQEFGREVFAVSYAPGGVLYAVNGKPYYGYSAPVQGFMLNFSNGDILDTFIPARKNFDMPHDIAAADDGTVYVGDAHANAVWKFSPSKAEHRSVKKAGIEVEEITETEIFETHIRSRPKTNESVEKQTQEKQQKQKNSAGVSTQEKQNVVQEINAGVPTQEKQNVVQESSAGVPTQEKQSVVQESSAGVSTQEKQSVVQESSAGVSFVLIITLLIIPIAVLIAIAIFIRWRKVRMYGGDIDHKSESSSVGILGKLRGKGSGGLNLGTFFATHKGYSRKGFDRLSTEGSDQEKDDDDGSDSEEEYSAPPIPPAPVSSS.

Positions 1-36 (MASLSSSFLVLFLLFQNSCYCFRSPLSVFKRYEEST) are cleaved as a signal peptide. A peptidylglycine alpha-hydroxylating monooxygenase region spans residues 1-390 (MASLSSSFLV…KREEEEVLDQ (390 aa)). The Intragranular segment spans residues 37 to 825 (RSLSNDCLGT…VQESSAGVSF (789 aa)). Intrachain disulfides connect Cys-43–Cys-182, Cys-77–Cys-122, Cys-110–Cys-127, Cys-223–Cys-330, and Cys-289–Cys-311. His-103 and His-104 together coordinate Cu(2+). 4 residues coordinate Cu(2+): His-168, His-238, His-240, and Met-310. The tract at residues 362–385 (HGHHHTEAEPEKNTGLQQPKREEE) is disordered. The tract at residues 391–712 (DVHLEEDTDW…SPSKAEHRSV (322 aa)) is peptidyl-alpha-hydroxyglycine alpha-amidating lyase. Arg-426 contributes to the a protein binding site. 3 NHL repeats span residues 463-504 (SKVL…LGAG), 512-557 (LGRA…FSPN), and 565-609 (GEET…FHAE). Intrachain disulfides connect Cys-526–Cys-547 and Cys-594–Cys-605. Positions 546 and 598 each coordinate a protein. Asn-658 carries an N-linked (GlcNAc...) asparagine glycan. Residues 662 to 705 (GDILDTFIPARKNFDMPHDIAAADDGTVYVGDAHANAVWKFSPS) form an NHL 4 repeat. Over residues 728–751 (FETHIRSRPKTNESVEKQTQEKQQ) the composition is skewed to basic and acidic residues. Disordered regions lie at residues 728 to 764 (FETH…TQEK) and 778 to 812 (QEKQ…TQEK). An N-linked (GlcNAc...) asparagine glycan is attached at Asn-739. Residues 755-764 (NSAGVSTQEK) are compositionally biased toward polar residues. Residues 826-846 (VLIITLLIIPIAVLIAIAIFI) form a helical membrane-spanning segment. Residues 847 to 935 (RWRKVRMYGG…PIPPAPVSSS (89 aa)) are Cytoplasmic-facing. Positions 896–935 (KGFDRLSTEGSDQEKDDDDGSDSEEEYSAPPIPPAPVSSS) are disordered. Acidic residues predominate over residues 909–922 (EKDDDDGSDSEEEY). The span at 925–935 (PPIPPAPVSSS) shows a compositional bias: pro residues.

This sequence in the C-terminal section; belongs to the peptidyl-alpha-hydroxyglycine alpha-amidating lyase family. In the N-terminal section; belongs to the copper type II ascorbate-dependent monooxygenase family. As to quaternary structure, monomer. It depends on Zn(2+) as a cofactor. The cofactor is Cu(2+).

It localises to the cytoplasmic vesicle. Its subcellular location is the secretory vesicle membrane. The catalysed reaction is a [peptide]-C-terminal glycine + 2 L-ascorbate + O2 = a [peptide]-C-terminal (2S)-2-hydroxyglycine + 2 monodehydro-L-ascorbate radical + H2O. It carries out the reaction a [peptide]-C-terminal (2S)-2-hydroxyglycine = a [peptide]-C-terminal amide + glyoxylate. In terms of biological role, bifunctional enzyme that catalyzes amidation of the C-terminus of proteins. Alpha-amidation is present at the C-terminus of many endocrine hormones and neuropeptides and is required for their activity. C-terminal amidation also takes place in response to protein fragmentation triggered by oxidative stress, promoting degradation of amidated protein fragments by the proteasome. Alpha-amidation involves two sequential reactions, both of which are catalyzed by separate catalytic domains of the enzyme. The first step, catalyzed by peptidyl alpha-hydroxylating monooxygenase (PHM) domain, is the copper-, ascorbate-, and O2- dependent stereospecific hydroxylation (with S stereochemistry) at the alpha-carbon (C-alpha) of the C-terminal glycine of the peptidylglycine substrate. The second step, catalyzed by the peptidylglycine amidoglycolate lyase (PAL) domain, is the zinc-dependent cleavage of the N-C-alpha bond, producing the alpha-amidated peptide and glyoxylate. This chain is Peptidyl-glycine alpha-amidating monooxygenase A (pam-a), found in Xenopus laevis (African clawed frog).